The primary structure comprises 160 residues: Large ribosomal subunit protein uL15 (160 aa).

Residues 1–11 are compositionally biased toward basic and acidic residues; it reads MKLNELRDNHG. The disordered stretch occupies residues 1-39; the sequence is MKLNELRDNHGARPKSKRLGRGIGSGKGKTSGKGVKGQK. Positions 21–35 are enriched in gly residues; sequence RGIGSGKGKTSGKGV.

This sequence belongs to the universal ribosomal protein uL15 family. As to quaternary structure, part of the 50S ribosomal subunit.

Binds to the 23S rRNA. The protein is Large ribosomal subunit protein uL15 of Granulibacter bethesdensis (strain ATCC BAA-1260 / CGDNIH1).